We begin with the raw amino-acid sequence, 146 residues long: 3-dehydroquinate dehydratase (146 aa).

Catalysis depends on Tyr-23, which acts as the Proton acceptor. Substrate-binding residues include Asn-74, His-80, and Asp-87. His-100 (proton donor) is an active-site residue. Substrate-binding positions include 101–102 (IS) and Arg-111.

This sequence belongs to the type-II 3-dehydroquinase family. Homododecamer.

It carries out the reaction 3-dehydroquinate = 3-dehydroshikimate + H2O. It participates in metabolic intermediate biosynthesis; chorismate biosynthesis; chorismate from D-erythrose 4-phosphate and phosphoenolpyruvate: step 3/7. In terms of biological role, catalyzes a trans-dehydration via an enolate intermediate. The chain is 3-dehydroquinate dehydratase from Bacillus cytotoxicus (strain DSM 22905 / CIP 110041 / 391-98 / NVH 391-98).